The sequence spans 1280 residues: Papilin (1280 aa).

The first 20 residues, 1–20 (MQLFPLLFSLLLTSTPGSWA), serve as a signal peptide directing secretion. 5 consecutive TSP type-1 domains span residues 27–81 (SDTW…ESCP), 305–362 (RGFS…QPCP), 363–422 (KTKR…ACNL), 424–482 (HCAV…EACP), and 485–540 (RGQA…QPCH). 3 disulfides stabilise this stretch: Cys39/Cys75, Cys43/Cys80, and Cys54/Cys65. 3 disulfide bridges follow: Cys425/Cys464, Cys436/Cys476, and Cys440/Cys481. Disordered stretches follow at residues 541 to 626 (LPQE…DCRH) and 672 to 715 (PQQA…PSEC). Polar residues predominate over residues 585 to 599 (AQSNPREGQDPNLSS). The segment covering 706–715 (QAHEGEPSEC) has biased composition (basic and acidic residues). Disulfide bonds link Cys750–Cys800, Cys759–Cys783, and Cys775–Cys796. Residues 750–800 (CLLPSAQGSCGDWAARWYFVASVGRCNRFWYGGCHGNANNFASEQECMNTC) form the BPTI/Kunitz inhibitor domain. The tract at residues 800-902 (CRGQHGPRRP…AVPPTHSPSY (103 aa)) is disordered. Basic and acidic residues predominate over residues 879–891 (IRPRVPGLDREAR). One can recognise an Ig-like C2-type 1 domain in the interval 900–990 (PSYRIRLAGS…EPQEIQLRVT (91 aa)). A disulfide bond links Cys926 and Cys973. Basic and acidic residues predominate over residues 1002-1012 (PRHFPEPRNPD). The segment at 1002–1042 (PRHFPEPRNPDLGHGPPHRGTGAEAGGHRVLSPSHPRPATR) is disordered. 2 Ig-like C2-type domains span residues 1039–1128 (PATR…VQLR) and 1133–1218 (LTIT…TEVK). Disulfide bonds link Cys1065-Cys1112 and Cys1154-Cys1202. In terms of domain architecture, PLAC spans 1231–1270 (LGKDCIDQPELANCALILQAQLCGNEYYSSFCCASCSRFQ).

Belongs to the papilin family.

The protein localises to the secreted. The protein is Papilin (Papln) of Mus musculus (Mouse).